The chain runs to 1451 residues: MPEQERKVTAKEASRKILSKLALPTRPWGQSMKQSFAFDNVGYEGGLDSTCFILQLTTGVVSILGMTCHSCVKSIEDRISSLKGIVSIKVSLEQGSATVKYVPSVLNLQQICLQIEDMGFEASAAEGKAASWPSRSSPAQEAVVKLRVEGMTCQSCVSSIEGKIRKLQGVVRVKVSLSNQEAVITYQPYLIQPEDLRDHICDMGFEAAIKNRTAPLRLGPIDINKLESTNLKRAAVPPIQNSNHLETPGHQQNHLATLPLRIDGMHCKSCVLNIEGNIGQLPGVQNIHVSLENKTAQVQYDSSCITPLFLQTAIEALPPGYFKVSLPDGLEKESGSSSVPSLGSSQRQQEPGPCRTAVLTITGIPRDSSVQPMEDMLSQMKGVQQIDISLAEGTGAVLYDPSVVSSDELRTAVEDMGFEVSVNPENITTNRVSSGNSVPQAVGDSPGSVQNMASDTRGLLTHQGPGYLSDSPPSPGGTASQKCFVQIKGMTCASCVSNIERSLQRHAGILSVLVALMSGKAEVKYDPEVIQSPRIAQLIEDLGFEAAIMEDNTVSEGDIELIITGMTCASCVHNIESKLTRTNGITYASVALATSKAHVKFDPEIIGPRDIIKVIEEIGFHASLAHRNPNAHHLDHKTEIKQWKKSFLCSLVFGIPVMGLMIYMLIPSSKPHETMVLDHNIIPGLSVLNLIFFILCTFVQFLGGWYFYVQAYKSLRHKSANMDVLIVLATTIAYAYSLVILVVAIAEKAEKSPVTFFDTPPMLFVFIALGRWLEHVAKSKTSEALAKLMSLQATEATVVTLGEDNLILREEQVPMELVQRGDIIKVVPGGKFPVDGKVLEGNTMADESLITGEAMPVTKKPGSIVIAGSINAHGSVLIKATHVGNDTTLAQIVKLVEEAQMSKAPIQQLADRFSGYFVPFIIIISTLTLVVWIIIGFVDFGIVQKYFPSPSKHISQTEVIIRFAFQTSITVLCIACPCSLGLATPTAVMVGTGVAAQNGVLIKGGKPLEMAHKIKTVMFDKTGTITHGVPRVMRFLLLVDVATLSLRKVLAVVGTAEASSEHPLGVAVTKYCKEELGTETLGYSTDFQAVPGCGISCKVSNVESILAHRGPTAHPIGVGNPPIGEGTGPQTFSVLIGNREWMRRNGLTISSDISDAMTDHEMKGQTAILVAIDGVLCGMIAIADAVKPEAALASITLKSMGVDVALITGDNRKTARAIATQVGINKVFAEVLPSHKVAKVQELQNKGKKVAMVGDGVNDSPALAQADVGIAIGTGTDVAIDAADVVLIRNDLLDVVASIHLSKRTVRRIRVNLVLALIYNMVGIPIAAGVFMPIGIVLQPWMGSAAASSVSVVLSSLQLKCYRKPDLERYEAQAHGRMKPLSASQVSVHVGMDDRRRDSPRATPWDQVSYVSQVSLSSLTSDRLSRHGGMAEDGGDKWSLLLSDRDEEQCI.

Over Met1 to Ser646 the chain is Cytoplasmic. 3 consecutive HMA domains span residues Thr57–Ser123, Ala142–Ala208, and Ala256–Phe322. Residues Cys68, Cys71, Cys153, Cys156, Cys267, and Cys270 each coordinate Cu(+). A disordered region spans residues Asp328 to Pro353. Low complexity predominate over residues Gly335–Ser345. One can recognise an HMA 4 domain in the interval Arg355 to Ser421. 3 positions are modified to phosphoserine: Ser469, Ser471, and Ser474. HMA domains lie at Gln481–Ala547 and Gly557–Ser623. Positions 492, 495, 568, and 571 each coordinate Cu(+). A helical membrane pass occupies residues Phe647–Ser668. The Extracellular segment spans residues Ser669 to Leu690. The chain crosses the membrane as a helical span at residues Ile691–Gln710. Residues Ala711 to His717 are Cytoplasmic-facing. Residues Lys718–Leu738 form a helical membrane-spanning segment. Residues Val739 to Phe757 lie on the Extracellular side of the membrane. A helical membrane pass occupies residues Asp758 to Lys778. Over Ser779–Arg912 the chain is Cytoplasmic. A helical membrane pass occupies residues Phe913–Ile935. Over Gly936–Phe965 the chain is Extracellular. The helical transmembrane segment at Gln966–Ala987 threads the bilayer. Over Val988–Arg1310 the chain is Cytoplasmic. The active-site 4-aspartylphosphate intermediate is Asp1020. 2 residues coordinate Mg(2+): Asp1255 and Asp1259. The chain crosses the membrane as a helical span at residues Val1311–Ala1328. The Extracellular segment spans residues Gly1329–Gln1339. The chain crosses the membrane as a helical span at residues Pro1340–Leu1357. Residues Gln1358–Ile1451 lie on the Cytoplasmic side of the membrane. Phosphoserine is present on residues Ser1384 and Ser1443.

Belongs to the cation transport ATPase (P-type) (TC 3.A.3) family. Type IB subfamily. Monomer. Interacts with COMMD1/MURR1. Interacts with DCTN4, in a copper-dependent manner. Interacts with ATOX1. Interacts (via C-terminus) with ZBTB16/PLZF. In terms of tissue distribution, expressed in brain, liver, kidney, spleen and stomach. In brain, detected in neuronal cells of the hippocampal formation, olfactory bulbs, cerebellum, cerebral cortex and nuclei in the brainstem. Isoform PINA is expressed during night in adult pineal gland (pinealocytes) and retina. Isoform PINA is not detected in other tissue.

The protein localises to the golgi apparatus. It localises to the trans-Golgi network membrane. It is found in the late endosome. It carries out the reaction Cu(+)(in) + ATP + H2O = Cu(+)(out) + ADP + phosphate + H(+). In terms of biological role, copper ion transmembrane transporter involved in the export of copper out of the cells, such as the efflux of hepatic copper into the bile. In Rattus norvegicus (Rat), this protein is Copper-transporting ATPase 2 (Atp7b).